A 484-amino-acid polypeptide reads, in one-letter code: RuvB-like helicase 1 (484 aa).

The segment covering 1 to 11 (MSMAASSSTAT) has biased composition (low complexity). The disordered stretch occupies residues 1-27 (MSMAASSSTATVQPSGIITQPPPPSTL). Residue 87-94 (GPPGTGKT) coordinates ATP.

The protein belongs to the RuvB family. In terms of assembly, may form heterododecamers with RVB2. Component of the SWR1 chromatin remodeling complex, the INO80 chromatin remodeling complex, and of the R2TP complex.

It localises to the nucleus. The enzyme catalyses ATP + H2O = ADP + phosphate + H(+). DNA helicase which participates in several chromatin remodeling complexes, including the SWR1 and the INO80 complexes. The SWR1 complex mediates the ATP-dependent exchange of histone H2A for the H2A variant HZT1 leading to transcriptional regulation of selected genes by chromatin remodeling. The INO80 complex remodels chromatin by shifting nucleosomes and is involved in DNA repair. Also involved in pre-rRNA processing. In Cryptococcus neoformans var. neoformans serotype D (strain B-3501A) (Filobasidiella neoformans), this protein is RuvB-like helicase 1 (RVB1).